Consider the following 520-residue polypeptide: Fumarate hydratase, mitochondrial (520 aa).

A mitochondrion-targeting transit peptide spans 1–39; it reads MASVAHISTAKAIFRAGGLPCRRLITPTLTGLPLKTHRM. Substrate-binding positions include 153–155, 184–187, 194–196, and T242; these read SGT, HPND, and SSN. H243 acts as the Proton donor/acceptor in catalysis. Residue S373 is part of the active site. Substrate-binding positions include S374 and 379 to 381; that span reads KVN.

It belongs to the class-II fumarase/aspartase family. Fumarase subfamily. Homotetramer.

Its subcellular location is the mitochondrion matrix. The protein resides in the cytoplasm. It is found in the nucleus. The enzyme catalyses (S)-malate = fumarate + H2O. The protein operates within carbohydrate metabolism; tricarboxylic acid cycle; (S)-malate from fumarate: step 1/1. Catalyzes the reversible stereospecific interconversion of fumarate to L-malate. In mitochondrion, catalyzes the hydration of fumarate to L-malate in the tricarboxylic acid (TCA) cycle to facilitate a transition step in the production of energy in the form of NADH. In cytoplasm and nucleus, involved in DNA repair in response to DNA damage: following DNA double-strand breaks (DSBs), translocates from the cytosol to the nucleus and promotes DNA repair by catalyzing the dehydration of L-malate to fumarate. The chain is Fumarate hydratase, mitochondrial (fum1) from Schizosaccharomyces pombe (strain 972 / ATCC 24843) (Fission yeast).